A 152-amino-acid polypeptide reads, in one-letter code: Large ribosomal subunit protein bL9 (152 aa).

Belongs to the bacterial ribosomal protein bL9 family.

Its function is as follows. Binds to the 23S rRNA. The sequence is that of Large ribosomal subunit protein bL9 from Prochlorococcus marinus (strain SARG / CCMP1375 / SS120).